A 172-amino-acid polypeptide reads, in one-letter code: uncharacterized protein (172 aa).

Helical transmembrane passes span 46–66, 76–96, 104–124, and 129–149; these read MFSIIFSFLYLLLIVPLFLYP, LLSLFYCAYVMYFLPLEVGLF, WKFLFILNIGVTALITVLGWS, and FFYAFLNIRTLVCGITIFTEI.

It localises to the endoplasmic reticulum membrane. This is an uncharacterized protein from Schizosaccharomyces pombe (strain 972 / ATCC 24843) (Fission yeast).